Here is a 167-residue protein sequence, read N- to C-terminus: Homeobox protein EgHBX3 (167 aa).

Residues 80–139 constitute a DNA-binding region (homeobox); sequence SQSKRRVLFNKFQISQLEKRLKQRYLTAQERQELAHTIGLTPTQVKIWFQNHAYKMKRLF.

This sequence belongs to the NK-2 homeobox family.

The protein localises to the nucleus. The sequence is that of Homeobox protein EgHBX3 (HBX3) from Echinococcus granulosus (Hydatid tapeworm).